Consider the following 369-residue polypeptide: Methionine import ATP-binding protein MetN 2 (369 aa).

Positions 33–270 constitute an ABC transporter domain; it reads VRFIGLGKTY…PRHEVTRTLL (238 aa). 67-74 serves as a coordination point for ATP; sequence GRSGAGKS.

The protein belongs to the ABC transporter superfamily. Methionine importer (TC 3.A.1.24) family. The complex is composed of two ATP-binding proteins (MetN), two transmembrane proteins (MetI) and a solute-binding protein (MetQ).

It localises to the cell inner membrane. It catalyses the reaction L-methionine(out) + ATP + H2O = L-methionine(in) + ADP + phosphate + H(+). The enzyme catalyses D-methionine(out) + ATP + H2O = D-methionine(in) + ADP + phosphate + H(+). Its function is as follows. Part of the ABC transporter complex MetNIQ involved in methionine import. Responsible for energy coupling to the transport system. The protein is Methionine import ATP-binding protein MetN 2 of Pseudomonas putida (strain ATCC 47054 / DSM 6125 / CFBP 8728 / NCIMB 11950 / KT2440).